A 411-amino-acid polypeptide reads, in one-letter code: Inhibin beta B chain (411 aa).

An N-terminal signal peptide occupies residues 1–28 (MDGLPGRALGAACLLLLVAGWLGPEAWG). Residues 28–69 (GSPTPPPSPAAPPPPPPPGAPGGSQDTCTSCGGGGGGFRRPE) are disordered. Residues 29–296 (SPTPPPSPAA…GDSRHRIRKR (268 aa)) constitute a propeptide that is removed on maturation. Pro residues predominate over residues 30 to 47 (PTPPPSPAAPPPPPPPGA). Asparagine 97 carries an N-linked (GlcNAc...) asparagine glycan. Disulfide bonds link cysteine 300/cysteine 308, cysteine 307/cysteine 376, cysteine 336/cysteine 408, and cysteine 340/cysteine 410.

The protein belongs to the TGF-beta family. Dimeric, linked by one or more disulfide bonds. Inhibin B is a dimer of alpha and beta-B. Activin B is a homodimer of beta-B. Activin AB is a dimer of beta-A and beta-B. Interacts with FST and FSTL3. Activin B interacts with BMPR2. Uterus, testis, ovary, lung, kidney, brain, CJ7 embryonic stem cells, and possibly in liver.

Its subcellular location is the secreted. Inhibins and activins inhibit and activate, respectively, the secretion of follitropin by the pituitary gland. Inhibins/activins are involved in regulating a number of diverse functions such as hypothalamic and pituitary hormone secretion, gonadal hormone secretion, germ cell development and maturation, erythroid differentiation, insulin secretion, nerve cell survival, embryonic axial development or bone growth, depending on their subunit composition. Inhibins appear to oppose the functions of activins. In terms of biological role, activin B is a dimer of alpha and beta-B that plays a role in several essential biological processes including embryonic development, stem cell maintenance and differentiation, haematopoiesis, cell proliferation and wound healing. Signals through type I receptor ACVR1C, abundantly expressed in pancreatic beta cells, and type II receptors like ACVR2A. Upon ligand binding, these receptors phosphorylate intracellular signaling mediators SMAD2 and SMAD3, which form a complex with SMAD4, translocate to the nucleus, and regulate gene expression. Plays a crucial role in the induction of hepcidin by inflammation through activation of ACVR1C and subsequent phosphorylation of SMAD1/5/8. Regulates adipocyte lipid metabolism by decreasing non-esterified fatty acids and glycerol release and increases intracellular triglyceride content. Stimulates wound healing by promoting cell migration and hair follicle regeneration through the JNK and ERK signaling pathways downstream of RHOA. Functionally, inhibin B is a dimer of alpha and beta-B that plays a crucial role in the regulation of the reproductive system by inhibiting the secretion of follicle-stimulating hormone (FSH) from the anterior pituitary gland. Thereby, maintains reproductive homeostasis in both males and females. Acts as a more potent suppressor of FSH release than inhibin A. Functions as competitive receptor antagonist binding activin type II receptors with high affinity in the presence of the TGF-beta type III coreceptor/TGFBR3L. The chain is Inhibin beta B chain (Inhbb) from Mus musculus (Mouse).